The following is a 126-amino-acid chain: MMTPTIPVALFDRLLVEGISPHELVRRKLMCLFNSCVVPGGETLPPLLTRGMPEWHEVNVGDKRVLNWFCRELRAAILRYEPSINMLEVSVKDAHHQTLALSLEAMLQDEPEPLRLEIAYSNGRWR.

Belongs to the GpW/Gp25 family. IraD subfamily. In terms of assembly, interacts with RssB.

The protein resides in the cytoplasm. Functionally, inhibits RpoS proteolysis by regulating RssB activity, thereby increasing the stability of the sigma stress factor RpoS during oxidative stress. Its effect on RpoS stability is due to its interaction with RssB, which probably blocks the interaction of RssB with RpoS, and the consequent delivery of the RssB-RpoS complex to the ClpXP protein degradation pathway. The protein is Anti-adapter protein IraD of Salmonella paratyphi A (strain ATCC 9150 / SARB42).